A 321-amino-acid polypeptide reads, in one-letter code: Olfactory receptor 5P60 (321 aa).

The Extracellular portion of the chain corresponds to 1–28; it reads MAFLHNGNHTAVTEFILLGLTDDPVLRI. Residue asparagine 8 is glycosylated (N-linked (GlcNAc...) asparagine). The chain crosses the membrane as a helical span at residues 29 to 49; sequence VLFTIILCIYLVTVSGNLSTI. Residues 50–57 are Cytoplasmic-facing; it reads LLIRVSSQ. A helical transmembrane segment spans residues 58–78; it reads LHHPMYFFLSHLASADIGYSS. Topologically, residues 79 to 102 are extracellular; the sequence is SVTPNMLVNFLVKQNTISYIGCSI. A disulfide bond links cysteine 100 and cysteine 192. Residues 103–123 traverse the membrane as a helical segment; that stretch reads QFGSAAFFGGLECFLLAVMAY. At 124-136 the chain is on the cytoplasmic side; it reads DRFVAICNPLLYS. The chain crosses the membrane as a helical span at residues 137 to 157; it reads TKMSTQVCVQLVVGSYIGGFL. Residues 158-199 lie on the Extracellular side of the membrane; that stretch reads NASFATVSFLFLFFCGPNIINHFFCDFAPLIELSCSDVRISV. The helical transmembrane segment at 200–220 threads the bilayer; the sequence is LVTSFSAGTVTMLTVLVIAIS. At 221-240 the chain is on the cytoplasmic side; sequence YTYILITILKMRSTEGRHKA. A helical transmembrane segment spans residues 241 to 261; the sequence is FSTCTSHLTAVSLFYGTITFI. The Extracellular portion of the chain corresponds to 262–274; that stretch reads YVMPKSRYSTDQN. The helical transmembrane segment at 275 to 295 threads the bilayer; sequence KVVSVFYMVVIPMLNPLIYSL. The Cytoplasmic segment spans residues 296 to 321; it reads RNNEIKGALRRHLGKKIFSQSNILFY.

It belongs to the G-protein coupled receptor 1 family.

It localises to the cell membrane. Its function is as follows. Potential odorant receptor. The chain is Olfactory receptor 5P60 from Mus musculus (Mouse).